Reading from the N-terminus, the 546-residue chain is DNA ligase (546 aa).

E244 lines the ATP pocket. K246 serves as the catalytic N6-AMP-lysine intermediate. Positions 251, 266, 295, 334, 405, and 411 each coordinate ATP.

It belongs to the ATP-dependent DNA ligase family. Requires Mg(2+) as cofactor.

It carries out the reaction ATP + (deoxyribonucleotide)n-3'-hydroxyl + 5'-phospho-(deoxyribonucleotide)m = (deoxyribonucleotide)n+m + AMP + diphosphate.. Functionally, DNA ligase that seals nicks in double-stranded DNA during DNA replication, DNA recombination and DNA repair. The polypeptide is DNA ligase (Methanocorpusculum labreanum (strain ATCC 43576 / DSM 4855 / Z)).